A 729-amino-acid chain; its full sequence is U-box domain-containing protein 17 (729 aa).

Positions 304-378 (TVPKDFVCPI…VQWCTASGIS (75 aa)) constitute a U-box domain. ARM repeat units lie at residues 438-477 (KENRAYIAEAGAIPHLCRLLTSENAIAQENSVTAMLNLSI), 479-520 (EKNK…SLSA), 523-562 (EYKKRIAIVDQCVEALALLLQNGTPRGKKDAVTALYNLST), and 564-601 (PDNCSRMIEGGGVSSLVGALKNEGVAEEAAGALALLVR).

The catalysed reaction is S-ubiquitinyl-[E2 ubiquitin-conjugating enzyme]-L-cysteine + [acceptor protein]-L-lysine = [E2 ubiquitin-conjugating enzyme]-L-cysteine + N(6)-ubiquitinyl-[acceptor protein]-L-lysine.. It functions in the pathway protein modification; protein ubiquitination. Functions as an E3 ubiquitin ligase. This is U-box domain-containing protein 17 (PUB17) from Arabidopsis thaliana (Mouse-ear cress).